The primary structure comprises 150 residues: Ribonuclease HI (150 aa).

In terms of domain architecture, RNase H type-1 spans 1-141; that stretch reads MKLINAYTDG…VDVLARGQAM (141 aa). Mg(2+) is bound by residues Asp-9, Glu-47, Asp-69, and Asp-133.

It belongs to the RNase H family. As to quaternary structure, monomer. Mg(2+) is required as a cofactor.

The protein localises to the cytoplasm. It carries out the reaction Endonucleolytic cleavage to 5'-phosphomonoester.. Functionally, endonuclease that specifically degrades the RNA of RNA-DNA hybrids. This is Ribonuclease HI from Xylella fastidiosa (strain Temecula1 / ATCC 700964).